A 176-amino-acid chain; its full sequence is Putative Ras-related protein RABA4e (176 aa).

This sequence belongs to the small GTPase superfamily. Rab family.

This chain is Putative Ras-related protein RABA4e (RABA4E), found in Arabidopsis thaliana (Mouse-ear cress).